A 34-amino-acid chain; its full sequence is Photosystem II reaction center protein Y (34 aa).

At 1-5 the chain is on the lumenal side; it reads DWRVL. The helical transmembrane segment at 6 to 22 threads the bilayer; it reads VVLLPVLLAAGWAVRNI. Residues 23 to 34 are Cytoplasmic-facing; sequence LPYAVKQVQKLL.

Belongs to the PsbY family. PSII is composed of 1 copy each of membrane proteins PsbA, PsbB, PsbC, PsbD, PsbE, PsbF, PsbH, PsbI, PsbJ, PsbK, PsbL, PsbM, PsbT, PsbX, PsbY, PsbZ, Psb30/Ycf12, peripheral proteins PsbO, CyanoQ (PsbQ), PsbU, PsbV and a large number of cofactors. It forms dimeric complexes. This protein is only loosely associated with PSII, and is not often found in crystals. The cofactor is PSII binds multiple chlorophylls, carotenoids and specific lipids..

It is found in the cellular thylakoid membrane. Functionally, loosely associated component of the core of photosystem II (PSII). PSII is a light-driven water plastoquinone oxidoreductase, using light energy to abstract electrons from H(2)O, generating a proton gradient subsequently used for ATP formation. In Thermostichus vulcanus (Synechococcus vulcanus), this protein is Photosystem II reaction center protein Y.